A 432-amino-acid chain; its full sequence is Alcohol acyltransferase 9 (432 aa).

Residues His156 and Asp379 each act as proton acceptor in the active site.

The protein belongs to the plant acyltransferase family. In terms of tissue distribution, expressed in fruit.

The enzyme catalyses 2-(methylsulfanyl)acetyl-CoA + butan-1-ol = butyl 2-(methylsulfanyl)acetate + CoA. The catalysed reaction is ethanol + acetyl-CoA = ethyl acetate + CoA. It carries out the reaction butan-1-ol + acetyl-CoA = butyl acetate + CoA. It catalyses the reaction butan-1-ol + propanoyl-CoA = butyl propanoate + CoA. Its function is as follows. Involved in the biosynthesis of volatile esters which confer kiwifruit flavor. Alcohol acyl transferase that can use a wide range of alcohols as substrate to produce esters. Exhibits acetyl-CoA:alcohol O-acyltransferase activity. The chain is Alcohol acyltransferase 9 from Actinidia eriantha (Velvet vine).